The sequence spans 389 residues: Protein P4 (389 aa).

In Rice tungro bacilliform virus (isolate Philippines) (RTBV), this protein is Protein P4.